A 179-amino-acid polypeptide reads, in one-letter code: Mediator of RNA polymerase II transcription subunit 29 (179 aa).

Belongs to the Mediator complex subunit 29 family. In terms of assembly, component of the Mediator complex.

It localises to the nucleus. Functionally, component of the Mediator complex, a coactivator involved in the regulated transcription of nearly all RNA polymerase II-dependent genes. Mediator functions as a bridge to convey information from gene-specific regulatory proteins to the basal RNA polymerase II transcription machinery. Mediator is recruited to promoters by direct interactions with regulatory proteins and serves as a scaffold for the assembly of a functional preinitiation complex with RNA polymerase II and the general transcription factors. This Danio rerio (Zebrafish) protein is Mediator of RNA polymerase II transcription subunit 29 (med29).